The following is a 388-amino-acid chain: Succinate--CoA ligase [ADP-forming] subunit beta (388 aa).

One can recognise an ATP-grasp domain in the interval 9 to 245 (KALLKEYGMP…KSQENERELK (237 aa)). ATP contacts are provided by residues K46, 53-55 (GRG), E100, Y103, and E108. Mg(2+) is bound by residues N200 and D214. Substrate contacts are provided by residues N265 and 322–324 (GIV).

The protein belongs to the succinate/malate CoA ligase beta subunit family. In terms of assembly, heterotetramer of two alpha and two beta subunits. The cofactor is Mg(2+).

The catalysed reaction is succinate + ATP + CoA = succinyl-CoA + ADP + phosphate. The enzyme catalyses GTP + succinate + CoA = succinyl-CoA + GDP + phosphate. It functions in the pathway carbohydrate metabolism; tricarboxylic acid cycle; succinate from succinyl-CoA (ligase route): step 1/1. In terms of biological role, succinyl-CoA synthetase functions in the citric acid cycle (TCA), coupling the hydrolysis of succinyl-CoA to the synthesis of either ATP or GTP and thus represents the only step of substrate-level phosphorylation in the TCA. The beta subunit provides nucleotide specificity of the enzyme and binds the substrate succinate, while the binding sites for coenzyme A and phosphate are found in the alpha subunit. This is Succinate--CoA ligase [ADP-forming] subunit beta from Acinetobacter baumannii (strain SDF).